Reading from the N-terminus, the 465-residue chain is Ribosomal oxygenase 2 (465 aa).

Residues 139–271 form the JmjC domain; that stretch reads QPQRFKDELW…NSWGDFLLDT (133 aa). Fe cation-binding residues include H179, D181, and H240. The residue at position 309 (S309) is a Phosphoserine.

The protein belongs to the ROX family. MINA53 subfamily. It depends on Fe(2+) as a cofactor.

It localises to the nucleus. The protein resides in the nucleolus. It carries out the reaction L-histidyl-[ribosomal protein uL15] + 2-oxoglutarate + O2 = (3S)-3-hydroxy-L-histidyl-[ribosomal protein uL15] + succinate + CO2. The catalysed reaction is L-histidyl-[protein] + 2-oxoglutarate + O2 = (3S)-3-hydroxy-L-histidyl-[protein] + succinate + CO2. Its function is as follows. Oxygenase that can act as both a histone lysine demethylase and a ribosomal histidine hydroxylase. Is involved in the demethylation of trimethylated 'Lys-9' on histone H3 (H3K9me3), leading to an increase in ribosomal RNA expression. Also catalyzes the hydroxylation of 60S ribosomal protein L27a on 'His-39'. May play an important role in cell growth and survival. May be involved in ribosome biogenesis, most likely during the assembly process of pre-ribosomal particles. The polypeptide is Ribosomal oxygenase 2 (RIOX2) (Pongo abelii (Sumatran orangutan)).